The chain runs to 501 residues: Ribose import ATP-binding protein RbsA 1 (501 aa).

2 consecutive ABC transporter domains span residues 5 to 241 (LQLK…VGRK) and 252 to 495 (APGD…VGKL). ATP is bound at residue 37-44 (GENGAGKS).

Belongs to the ABC transporter superfamily. Ribose importer (TC 3.A.1.2.1) family. In terms of assembly, the complex is composed of an ATP-binding protein (RbsA), two transmembrane proteins (RbsC) and a solute-binding protein (RbsB).

Its subcellular location is the cell inner membrane. The catalysed reaction is D-ribose(out) + ATP + H2O = D-ribose(in) + ADP + phosphate + H(+). Part of the ABC transporter complex RbsABC involved in ribose import. Responsible for energy coupling to the transport system. In Escherichia coli O157:H7, this protein is Ribose import ATP-binding protein RbsA 1.